Here is a 413-residue protein sequence, read N- to C-terminus: Phosphopentomutase (413 aa).

The Mn(2+) site is built by aspartate 11, aspartate 306, histidine 311, aspartate 347, histidine 348, and histidine 359.

This sequence belongs to the phosphopentomutase family. The cofactor is Mn(2+).

Its subcellular location is the cytoplasm. The enzyme catalyses 2-deoxy-alpha-D-ribose 1-phosphate = 2-deoxy-D-ribose 5-phosphate. It carries out the reaction alpha-D-ribose 1-phosphate = D-ribose 5-phosphate. It functions in the pathway carbohydrate degradation; 2-deoxy-D-ribose 1-phosphate degradation; D-glyceraldehyde 3-phosphate and acetaldehyde from 2-deoxy-alpha-D-ribose 1-phosphate: step 1/2. In terms of biological role, isomerase that catalyzes the conversion of deoxy-ribose 1-phosphate (dRib-1-P) and ribose 1-phosphate (Rib-1-P) to deoxy-ribose 5-phosphate (dRib-5-P) and ribose 5-phosphate (Rib-5-P), respectively. The chain is Phosphopentomutase from Helicobacter pylori (strain HPAG1).